The sequence spans 322 residues: NADH-cytochrome b5 reductase 2 (322 aa).

A helical membrane pass occupies residues 31–48 (LAPIYAAVGITGVGVGLY). The region spanning 72–176 (QGWFDLKLSE…KGPIVKYPWE (105 aa)) is the FAD-binding FR-type domain. 179–214 (KHNHICLIAGGTGITPMYQLAREIFKNPEDQTKVTL) lines the FAD pocket.

This sequence belongs to the flavoprotein pyridine nucleotide cytochrome reductase family. Requires FAD as cofactor.

The protein localises to the mitochondrion outer membrane. It catalyses the reaction 2 Fe(III)-[cytochrome b5] + NADH = 2 Fe(II)-[cytochrome b5] + NAD(+) + H(+). Functionally, may mediate the reduction of outer membrane cytochrome b5. The sequence is that of NADH-cytochrome b5 reductase 2 (mcr1) from Aspergillus niger (strain ATCC MYA-4892 / CBS 513.88 / FGSC A1513).